Reading from the N-terminus, the 71-residue chain is Vitellogenin-B1 (71 aa).

A signal peptide spans 1-15 (MRGIILAQLLALAGS). The region spanning 24-71 (FSESKPYVYNYEGIILNGIPENGLARSGIKLNCKAEISGYAQRSYMLK) is the Vitellogenin domain.

In terms of tissue distribution, produced by the liver, secreted into the blood and then sequestered by receptor mediated endocytosis into growing oocytes, where it is generally cleaved, giving rise to the respective yolk components.

In terms of biological role, precursor of the major egg-yolk proteins that are sources of nutrients during early development of oviparous organisms. The polypeptide is Vitellogenin-B1 (Xenopus laevis (African clawed frog)).